Reading from the N-terminus, the 49-residue chain is SPbeta prophage-derived uncharacterized protein YoqT (49 aa).

A helical transmembrane segment spans residues 7–29; sequence CFVNWSFDKIMDYILIAGLYFVF.

The protein localises to the cell membrane. This chain is SPbeta prophage-derived uncharacterized protein YoqT (yoqT), found in Bacillus subtilis (strain 168).